The following is a 655-amino-acid chain: NACHT, LRR and PYD domains-containing protein 10 (655 aa).

The Pyrin domain maps to 1 to 96 (MAMAKARKPR…VDQLSHICLH (96 aa)). The NACHT domain occupies 167-484 (SLVVLQGSAG…AMSYLVKEDQ (318 aa)). An ATP-binding site is contributed by 173–180 (GSAGTGKT). The segment covering 597-609 (QSQNLFSVKSSLS) has biased composition (polar residues). A disordered region spans residues 597-655 (QSQNLFSVKSSLSHGPKEEQKCPSVHGQKEGKDNIAGTQKEASTGKGRGTEETPKNTYI). Basic and acidic residues-rich tracts occupy residues 611 to 629 (GPKEEQKCPSVHGQKEGKD) and 644 to 655 (RGTEETPKNTYI).

It belongs to the NLRP family. In terms of assembly, oligomerizes. Interacts with PYCARD. Also interacts with CASP1 and IL1B. Interacts with NOD1 and components of the NOD1 signaling pathway including RIPK2, NR2C2/TAK1 and IKBKG/NEMO. In terms of tissue distribution, highly expressed in basal and suprabasal epidermal cell layers with lower levels in dermal fibroblast cells (at protein level). Widely expressed with highest levels in heart, brain and skeletal muscle. Also expressed in liver, colon, dermis and epidermis. Little expression detected in myeloid cells or peripheral blood mononuclear cells.

It is found in the cytoplasm. It localises to the cell membrane. Its function is as follows. Inhibits autoprocessing of CASP1, CASP1-dependent IL1B secretion, PYCARD aggregation and PYCARD-mediated apoptosis but not apoptosis induced by FAS or BID. Displays anti-inflammatory activity. Required for immunity against C.albicans infection. Involved in the innate immune response by contributing to pro-inflammatory cytokine release in response to invasive bacterial infection. Contributes to T-cell-mediated inflammatory responses in the skin. Plays a role in protection against periodontitis through its involvement in induction of IL1A via ERK activation in oral epithelial cells infected with periodontal pathogens. Exhibits both ATPase and GTPase activities. The protein is NACHT, LRR and PYD domains-containing protein 10 (NLRP10) of Homo sapiens (Human).